The following is a 221-amino-acid chain: Ribosomal RNA small subunit methyltransferase Nep1 (221 aa).

S-adenosyl-L-methionine contacts are provided by residues Gly-174, Gly-179, and 196-201 (LGEVAM).

This sequence belongs to the class IV-like SAM-binding methyltransferase superfamily. RNA methyltransferase NEP1 family. As to quaternary structure, homodimer.

The catalysed reaction is a pseudouridine in rRNA + S-adenosyl-L-methionine = an N(1)-methylpseudouridine in rRNA + S-adenosyl-L-homocysteine + H(+). Its function is as follows. Methyltransferase involved in ribosomal biogenesis. Specifically catalyzes the N1-methylation of the pseudouridine corresponding to position 914 in M.jannaschii 16S rRNA. This is Ribosomal RNA small subunit methyltransferase Nep1 from Pyrobaculum arsenaticum (strain DSM 13514 / JCM 11321 / PZ6).